Consider the following 370-residue polypeptide: MEHLPEQYRQLFPTLQTHTMLASCSQSALAEPVSRAIQDYYDSLLYKGTNWKEAIEKTEFARNEFAKLIGAEPDEVAIVPSVSDALVSVASSLTAFGKKHVVYTDMDFPAVPHVWQAHSDYTVSVIPSIDGVLPLEQYETHISDETVLTCVPHVHYRDGYVQDIKAIAEISQRKGSLLFVDAYQSAGHIPIDVKEWGVDMLAAGTRKYLLGIPGVAFLYVRKELADALKPKASAWFGRESGFDGAYAKVARRFQTGTPAFISVYAAAAALSLLNHIGVSHIRDHVKTICADAVQYAAEKGLQLAAAQGGIQPGMVAIRDERASETAGLLKKKKVICAPRENVIRLAPHFYNTKEEMRHAIDEIAAKTIHK.

Position 207 is an N6-(pyridoxal phosphate)lysine (K207).

This sequence belongs to the class-V pyridoxal-phosphate-dependent aminotransferase family. Pyridoxal 5'-phosphate serves as cofactor.

This is an uncharacterized protein from Bacillus subtilis (strain 168).